The primary structure comprises 631 residues: Nucleoside triphosphatase I (631 aa).

Residues 42 to 204 (FLGLDSMHSL…TMLVNLLRPG (163 aa)) enclose the Helicase ATP-binding domain. 55-62 (HETGVGKT) serves as a coordination point for ATP. Residues 141–144 (DECH) carry the DEXH box motif. Residues 367–532 (KFIDVCLGIL…EFVQLFRVFK (166 aa)) enclose the Helicase C-terminal domain. The segment at 457 to 524 (DIFILDMTWN…EIIQSKSKEF (68 aa)) is binding to the cap-specific mRNA (nucleoside-2'-O-)-methyltransferase.

This sequence belongs to the helicase family. NPH I subfamily. As to quaternary structure, monomer. Interacts (via C-terminus) with RAP94/OPG109 (via N-terminus). Interacts with the cap-specific mRNA (nucleoside-2'-O-)-methyltransferase OPG102.

It localises to the virion. It carries out the reaction a ribonucleoside 5'-triphosphate + H2O = a ribonucleoside 5'-diphosphate + phosphate + H(+). Functionally, DNA-dependent ATPase that acts as a 5' to 3' translocase on single-stranded DNA and thereby plays a role in transcription termination of viral early genes. Uses forward translocation in concert with the viral RNA polymerase RAP94/OPG109 subunit and the capping enzyme/VTF to catalyze release of UUUUUNU-containing nascent RNA from the elongation complex. In addition, acts as a positive elongation factor to assist transcription through problematic sequences. The protein is Nucleoside triphosphatase I (OPG123) of Bos taurus (Bovine).